A 461-amino-acid chain; its full sequence is Flavin-containing monooxygenase FMO GS-OX4 (461 aa).

17–22 (GAGAAG) serves as a coordination point for FAD. 211–216 (GNFASG) is a binding site for NADP(+).

The protein belongs to the FMO family.

It catalyses the reaction a (Z)-omega-(methylsulfanyl)-N-sulfo-alkylhydroximate S-glucoside + NADPH + O2 + H(+) = a (Z)-omega-(methylsulfinyl)-alkyl-glucosinolate + NADP(+) + H2O. Its function is as follows. Catalyzes the conversion of methylthioalkyl glucosinolates of any chain length into methylsulfinylalkyl glucosinolates. The protein is Flavin-containing monooxygenase FMO GS-OX4 (FMOGS-OX4) of Arabidopsis thaliana (Mouse-ear cress).